The primary structure comprises 297 residues: D-alanine--D-alanine ligase (297 aa).

The 200-residue stretch at 95-294 folds into the ATP-grasp domain; that stretch reads KMLWKAFGLP…FEQLVVKILE (200 aa). An ATP-binding site is contributed by 125–180; that stretch reads VAKLGLPLMVKPSLEGSSVGLTKVKAVEELKSAVEYALKFDNTILIEEWLAGDELT. Residues Asp248, Glu261, and Asn263 each coordinate Mg(2+).

The protein belongs to the D-alanine--D-alanine ligase family. Requires Mg(2+) as cofactor. Mn(2+) is required as a cofactor.

The protein localises to the cytoplasm. The catalysed reaction is 2 D-alanine + ATP = D-alanyl-D-alanine + ADP + phosphate + H(+). The protein operates within cell wall biogenesis; peptidoglycan biosynthesis. Functionally, cell wall formation. This Haemophilus influenzae (strain PittEE) protein is D-alanine--D-alanine ligase.